The primary structure comprises 256 residues: Pimeloyl-[acyl-carrier protein] methyl ester esterase (256 aa).

The region spanning 16-240 (LVILHGWGVN…PKASHAPFLS (225 aa)) is the AB hydrolase-1 domain. Substrate is bound by residues tryptophan 22, 80–81 (SL), and 143–147 (FLAIQ). Residue serine 80 is the Nucleophile of the active site. Catalysis depends on residues aspartate 207 and histidine 235. Substrate is bound at residue histidine 235.

Belongs to the AB hydrolase superfamily. Carboxylesterase BioH family. As to quaternary structure, monomer.

It is found in the cytoplasm. It catalyses the reaction 6-carboxyhexanoyl-[ACP] methyl ester + H2O = 6-carboxyhexanoyl-[ACP] + methanol + H(+). It participates in cofactor biosynthesis; biotin biosynthesis. In terms of biological role, the physiological role of BioH is to remove the methyl group introduced by BioC when the pimeloyl moiety is complete. It allows to synthesize pimeloyl-ACP via the fatty acid synthetic pathway through the hydrolysis of the ester bonds of pimeloyl-ACP esters. The chain is Pimeloyl-[acyl-carrier protein] methyl ester esterase from Shewanella woodyi (strain ATCC 51908 / MS32).